We begin with the raw amino-acid sequence, 185 residues long: MADQAYEPRLKTVYRERIRAAMKEQFGYTNEMQIPKLDKIVLNMGIGEAVADSKKAQTALKDLQAIAGQKPVATKARKSIAGFKLREGMVVGAKVTLRKDRMYEFLDRLVTIALPRVKDFRGLNGKSFDGRGNYAMGLKEHLVFPEINYDQIEQIWGMDIIVCTTAKSDQEAKALLKEFQFPFVN.

This sequence belongs to the universal ribosomal protein uL5 family. In terms of assembly, part of the 50S ribosomal subunit; part of the 5S rRNA/L5/L18/L25 subcomplex. Contacts the 5S rRNA and the P site tRNA. Forms a bridge to the 30S subunit in the 70S ribosome.

In terms of biological role, this is one of the proteins that bind and probably mediate the attachment of the 5S RNA into the large ribosomal subunit, where it forms part of the central protuberance. In the 70S ribosome it contacts protein S13 of the 30S subunit (bridge B1b), connecting the 2 subunits; this bridge is implicated in subunit movement. Contacts the P site tRNA; the 5S rRNA and some of its associated proteins might help stabilize positioning of ribosome-bound tRNAs. This is Large ribosomal subunit protein uL5 from Caulobacter vibrioides (strain NA1000 / CB15N) (Caulobacter crescentus).